Reading from the N-terminus, the 1070-residue chain is MHQPPESTAAATAAADISARKMAHPAMFPRRGSGSGSASALNAAGTGVGSNATSSEDFPPPSLLQPPPPAASSTSGPQPPPPQSLNLLSQAQLQAQPLAPGGTQMKKKSGFQITSVTPAQISASISSNNSIAEDTESYDDLDESHTEDLSSSEILDVSLSRATDLGEPERSSSEETLNNFQEAETPGAVSPNQPHLPQPHLPHLPQQNVVINGNAHPHHLHHHHHIHHGHHLQHGHHHPSHVAVASASIPGGPPPSPVTRKLSTTGSSDSITPVAPTSAVSSSGSPASVMTNMRAPSTTGGIGINSVTGTSTVNNVNITAVGSFNPNVTSSMLGNVNISTSNIPSAASVSVGPGVTSGVNVNILSGMGNGTISSSAAVNSVPNAAAGMTGGSISSQQQQPTVNTSRFRVVKLDSSSEPFKKGRWTCTEFYEKENAVPATEGVLINKVVETVKQNPIEVTSERESTSGSSVSSSVSTRSHYTESVGSGEMGAPTVVVQQQQQQQQQQPALQGVTLQQMDFGSTGPQSIPAVSIPQSISQSQISQVQLQSQELSYQQKQGLQPVPLQATMSAATGIQPSPVNVVGVTSALGQQPSISSLAQPQLPYSQAAPPVQTPLPGAPPPQQLQYGQQQPMVSTQMAPGHVKSVTQNPASEYVQQQPILQTAMSSGQPSSAGVGAGTTVIPVAQPQGIQLPVQPTAVPAQPTGASVQPVGQAQAAVSAVPTGSQIANIGQQANIPTAVQQPSTQVPPSVIQQGAPPSSQVVPPAQTGIIHQGVQTSAPSLPQQLVIASQSSLLTVPPQPQGVEPVAQGIVSQQLPAVSPLPSASSISVTSQVSSAGPSGMPSAPTNLVPPQNIAQTPATQNGNLVQSVSQPPLIATNINLPLAQQIPLSSTQFSAQSLAQAIGSQIEDARHAAEPSLVGLPQTISGDSGGMSAVSDGSSSSLAASASLFPLKVLPLTTPLVDGEDESSSGASVVAIDNKIEQAMDLVKSHLMYAVREEVEVLKEQIKELIEKNSQLEQENNLLKTLASPEQLAQFQAQLQTGSPPATTQPQGTTQPPAQPASQGSGPTA.

The required for interaction with TGFBR1 and promotion of TGF-beta signaling stretch occupies residues 1–98; sequence MHQPPESTAA…SQAQLQAQPL (98 aa). Disordered regions lie at residues 1 to 110, 125 to 289, 458 to 487, 604 to 637, and 830 to 858; these read MHQP…KKSG, ISSN…PASV, VTSE…VGSG, YSQA…STQM, and TSQV…AQTP. A compositionally biased stretch (low complexity) spans 36 to 45; it reads GSASALNAAG. Residues 58–70 show a composition bias toward pro residues; that stretch reads FPPPSLLQPPPPA. Low complexity predominate over residues 84-100; that stretch reads SLNLLSQAQLQAQPLAP. Acidic residues predominate over residues 133-142; that stretch reads EDTESYDDLD. The segment covering 216 to 240 has biased composition (basic residues); sequence HPHHLHHHHHIHHGHHLQHGHHHPS. The span at 241–250 shows a compositional bias: low complexity; that stretch reads HVAVASASIP. Polar residues predominate over residues 261 to 271; that stretch reads KLSTTGSSDSI. A Phosphoserine modification is found at Ser263. Low complexity-rich tracts occupy residues 272-289 and 465-478; these read TPVA…PASV and TSGS…STRS. Over residues 611–622 the composition is skewed to pro residues; it reads VQTPLPGAPPPQ. A compositionally biased stretch (low complexity) spans 830–845; sequence TSQVSSAGPSGMPSAP. Over residues 849–858 the composition is skewed to polar residues; the sequence is VPPQNIAQTP. A leucine-zipper region spans residues 1003–1024; sequence LKEQIKELIEKNSQLEQENNLL. Positions 1034-1070 are disordered; it reads AQFQAQLQTGSPPATTQPQGTTQPPAQPASQGSGPTA. Over residues 1041 to 1070 the composition is skewed to low complexity; that stretch reads QTGSPPATTQPQGTTQPPAQPASQGSGPTA.

Belongs to the TSC-22/Dip/Bun family. As to quaternary structure, forms homodimers. Forms heterodimers. Component of a complex composed of TSC22D1 (via N-terminus), TGFBR1 and TGFBR2; the interaction between TSC22D1 and TGFBR1 is inhibited by SMAD7 and promoted by TGFB1. Interacts with SMAD7; the interaction requires TGF-beta and the interaction is inhibited by TGFBR1. Interacts with TPT1/fortilin; interaction results in the destabilization of TSC22D1 protein and prevents TSC22D1-mediated apoptosis. Interacts with SMAD4 (via N-terminus). Interacts with ACVRL1/ALK1, ACVR1/ALK2, BMPR1A/ALK3, ACVR1B/ALK4, BMPR1B/ALK6, ACVR2A/ACTRII, and BMPR2. Interacts with SMAD6. Interacts with TFE3; the interaction is enhanced in the presence of TGF-beta. Forms a heterodimer with TSC22D4/THG1. In terms of assembly, forms a heterodimer with TSC22D4/THG1. Interacts with histone H1-2. Interacts with GNL3.

It localises to the cytoplasm. It is found in the nucleus. The protein localises to the cell membrane. The protein resides in the mitochondrion. In terms of biological role, transcriptional repressor. Acts on the C-type natriuretic peptide (CNP) promoter. Acts to promote CASP3-mediated apoptosis. Positively regulates TGF-beta signaling by interacting with SMAD7 which inhibits binding of SMAD7 to TGFBR1, preventing recruitment of SMURF ubiquitin ligases to TGFBR1 and inhibiting SMURF-mediated ubiquitination and degradation of TGFBR1. Contributes to enhancement of TGF-beta signaling by binding to and modulating the transcription activator activity of SMAD4. Promotes TGF-beta-induced transcription of COL1A2; via its interaction with TFE3 at E-boxes in the gene proximal promoter. Plays a role in the repression of hematopoietic precursor cell growth. Promotes IL2 deprivation-induced apoptosis in T-lymphocytes, via repression of TSC22D3/GILZ transcription and activation of the caspase cascade. Its function is as follows. May act to negatively regulate TGFB3 signaling and thereby inhibit cell death in mammary gland cells. Functionally, positively regulates cell death in response to TGFB3 during mammary gland involution. This chain is TSC22 domain family protein 1, found in Pongo abelii (Sumatran orangutan).